The sequence spans 806 residues: Lysine-specific demethylase JMJ15 (806 aa).

Residues 1–43 (MEPFSAAQNKEDKDTSVEPPRRRCHRKNKGTNVEPPSSPYHPK) are disordered. The segment covering 9 to 21 (NKEDKDTSVEPPR) has biased composition (basic and acidic residues). In terms of domain architecture, JmjN spans 61-102 (APVFHPTSEEFEDTLAYIEKIRPLAESFGICRIVPPSNWSPP). Residues 128–176 (NRGPVKKKTPKGRKRKRGKYSRTVAPKKRNGSVSKSVSTPKATEEENFG) are disordered. Residues 131–157 (PVKKKTPKGRKRKRGKYSRTVAPKKRN) are compositionally biased toward basic residues. The short motif at 132-139 (VKKKTPKG) is the Nuclear localization signal element. Positions 158–168 (GSVSKSVSTPK) are enriched in polar residues. The JmjC domain maps to 261-427 (KYISSGWNLN…HGQNAVEIYS (167 aa)). Fe cation contacts are provided by His307, Glu309, and His395. Cys514, Cys517, Cys528, Cys531, Cys539, His542, Cys545, and Cys547 together coordinate Zn(2+). A C5HC2 zinc finger spans residues 514 to 566 (CISCFSDLHLSATGCKNCSSLEEYGCTKHDICSCEGKDRFIFLRYTIDELSSL). Residues 629-687 (IMDLAAYHVEPINLGFLVVGKLWCNKHAIFPKGFKSRVKFYNVQDPMRISYYVSEIVDA) form the FYR N-terminal domain. One can recognise an FYR C-terminal domain in the interval 689–775 (LLGPLFKVTL…HGQVEYWNHK (87 aa)).

It belongs to the JARID1 histone demethylase family. Requires Fe(2+) as cofactor. In terms of tissue distribution, expressed in roots, cotyledons, shoot apex, rosette and cauline leaves, stems, inflorescences and siliques. Expressed at low levels during vegetative growth but to higher levels in young floral organs.

The protein localises to the nucleus. The enzyme catalyses N(6),N(6),N(6)-trimethyl-L-lysyl(4)-[histone H3] + 2-oxoglutarate + O2 = N(6),N(6)-dimethyl-L-lysyl(4)-[histone H3] + formaldehyde + succinate + CO2. Functionally, histone demethylase that demethylates 'Lys-4' (H3K4me) of histone H3 with a specific activity for H3K4me3. No activity on H3K4me2, H3K4me1, H3K9me3/2, H3K27me3/2 and H3K36me3/2. Involved in the control of flowering time by demethylating H3K4me3 at the FLC locus and repressing its expression. The repression of FLC level and reduction in H3K4me3 at the FLC locus results in induction of the flowering activator FT, which is a downstream target of FLC. Promotes salt tolerance by down-regulating the expression of several transcriptions factors involved in stress responses via H3K4me3 and H3K4me2 demethylation. The polypeptide is Lysine-specific demethylase JMJ15 (Arabidopsis thaliana (Mouse-ear cress)).